A 312-amino-acid chain; its full sequence is Olfactory receptor 6C68 (312 aa).

The Extracellular segment spans residues 1-23 (MRKHTAITTFILLGLTEDPQLQV). The chain crosses the membrane as a helical span at residues 24 to 44 (LLFMFLFITYMLSVTGKLTII). The Cytoplasmic portion of the chain corresponds to 45–55 (ALTMLDPHLKT). A helical membrane pass occupies residues 56–76 (PMYFFLQNLSFLEISFTATCV). Residues 77 to 95 (PRFLYSISTGNKIITYNAC) are Extracellular-facing. A disulfide bond links C95 and C177. A helical membrane pass occupies residues 96 to 116 (VIQLFFADLFGVTEFFLLATM). Residues 117–143 (SYDRYVAICKPLHYMAIMSNKVCKTMV) lie on the Cytoplasmic side of the membrane. The chain crosses the membrane as a helical span at residues 144-164 (ICCWMAALMIILPPLSLGFHL). At 165–197 (EFCDSNVINHFGCDALPILKIPCSDTSLIEQMV) the chain is on the extracellular side. A helical transmembrane segment spans residues 198-218 (VASAVLTFIITLVCVVLSYTY). Over 219–239 (IIRTILKFPSVQQKKKAFSTC) the chain is Cytoplasmic. Residues 240 to 260 (SSHITVVSITYGSCIFIYIKP) form a helical membrane-spanning segment. Residues 261–271 (SAKEEVNINKG) are Extracellular-facing. A helical transmembrane segment spans residues 272-292 (VSVLISSISPMLNSFIYTLRN). Over 293–312 (EQVKQAFHDSLKKIAFRLKK) the chain is Cytoplasmic.

The protein belongs to the G-protein coupled receptor 1 family.

The protein resides in the cell membrane. Functionally, odorant receptor. The sequence is that of Olfactory receptor 6C68 (OR6C68) from Homo sapiens (Human).